Consider the following 275-residue polypeptide: Thiazole synthase (275 aa).

Lys-108 acts as the Schiff-base intermediate with DXP in catalysis. 1-deoxy-D-xylulose 5-phosphate is bound by residues Gly-169, 196 to 197, and 218 to 219; these read AG and NT.

This sequence belongs to the ThiG family. In terms of assembly, homotetramer. Forms heterodimers with either ThiH or ThiS.

It is found in the cytoplasm. The catalysed reaction is [ThiS sulfur-carrier protein]-C-terminal-Gly-aminoethanethioate + 2-iminoacetate + 1-deoxy-D-xylulose 5-phosphate = [ThiS sulfur-carrier protein]-C-terminal Gly-Gly + 2-[(2R,5Z)-2-carboxy-4-methylthiazol-5(2H)-ylidene]ethyl phosphate + 2 H2O + H(+). It functions in the pathway cofactor biosynthesis; thiamine diphosphate biosynthesis. In terms of biological role, catalyzes the rearrangement of 1-deoxy-D-xylulose 5-phosphate (DXP) to produce the thiazole phosphate moiety of thiamine. Sulfur is provided by the thiocarboxylate moiety of the carrier protein ThiS. In vitro, sulfur can be provided by H(2)S. This chain is Thiazole synthase, found in Ralstonia pickettii (strain 12J).